We begin with the raw amino-acid sequence, 370 residues long: mRNA cap guanine-N(7) methyltransferase 1 (370 aa).

The segment covering 1-11 (MKRGFSDSPSS) has biased composition (low complexity). Residues 1–34 (MKRGFSDSPSSSAPPPSSRFKSNPEGDSQFLEDE) are disordered. The mRNA cap 0 methyltransferase domain maps to 61 to 341 (SPIIHLKKLN…LYLSFVLRKR (281 aa)). 70-71 (NN) provides a ligand contact to mRNA. S-adenosyl-L-methionine is bound by residues lysine 74, alanine 92, aspartate 114, 150–151 (DC), and 172–174 (QFA).

The protein belongs to the class I-like SAM-binding methyltransferase superfamily. mRNA cap 0 methyltransferase family.

It localises to the nucleus. The enzyme catalyses a 5'-end (5'-triphosphoguanosine)-ribonucleoside in mRNA + S-adenosyl-L-methionine = a 5'-end (N(7)-methyl 5'-triphosphoguanosine)-ribonucleoside in mRNA + S-adenosyl-L-homocysteine. Its function is as follows. mRNA-capping methyltransferase that methylates the N7 position of the added guanosine to the 5'-cap structure of mRNAs. Binds RNA containing 5'-terminal GpppC. This is mRNA cap guanine-N(7) methyltransferase 1 from Arabidopsis thaliana (Mouse-ear cress).